A 447-amino-acid polypeptide reads, in one-letter code: N-succinylarginine dihydrolase (447 aa).

Residues 19-28, N110, and 137-138 each bind substrate; these read AGLSFGNKAS and HR. Residue E174 is part of the active site. R212 serves as a coordination point for substrate. H248 is a catalytic residue. Residues D250 and N359 each coordinate substrate. The Nucleophile role is filled by C365.

Belongs to the succinylarginine dihydrolase family. In terms of assembly, homodimer.

The catalysed reaction is N(2)-succinyl-L-arginine + 2 H2O + 2 H(+) = N(2)-succinyl-L-ornithine + 2 NH4(+) + CO2. Its pathway is amino-acid degradation; L-arginine degradation via AST pathway; L-glutamate and succinate from L-arginine: step 2/5. Its function is as follows. Catalyzes the hydrolysis of N(2)-succinylarginine into N(2)-succinylornithine, ammonia and CO(2). In Escherichia coli O157:H7, this protein is N-succinylarginine dihydrolase.